The following is a 75-amino-acid chain: UPF0291 protein lmo1304 (75 aa).

The disordered stretch occupies residues 56–75 (DPNGKDVTPHKVKQLRKNKY). Residues 65-75 (HKVKQLRKNKY) show a composition bias toward basic residues.

It belongs to the UPF0291 family.

The protein resides in the cytoplasm. The polypeptide is UPF0291 protein lmo1304 (Listeria monocytogenes serovar 1/2a (strain ATCC BAA-679 / EGD-e)).